The primary structure comprises 170 residues: Cathelicidin antimicrobial peptide (170 aa).

An N-terminal signal peptide occupies residues 1-30 (MKTQRHGPSLGRWSLVLLLLGLVMPLAIVA). A propeptide spans 31 to 131 (QVLSYQEAVL…DISCDKDNRR (101 aa)) (cathelin-like domain (CLD)). 2 disulfide bridges follow: Cys-86-Cys-97 and Cys-108-Cys-125. Residues 150–162 (LKKIGQKIKDFWG) are active core.

The protein belongs to the cathelicidin family. In terms of assembly, monomer, homodimer or homotrimer (in vitro). Oligomerizes as tetra- or hexamer in solution (in vitro). Proteolytically cleaved by proteinase PRTN3 into antibacterial peptide LL-37. Proteolytically cleaved by cathepsin CTSG and neutrophil elastase ELANE. Post-translationally, resistant to proteolytic degradation in solution, and when bound to both zwitterionic (mimicking mammalian membranes) and negatively charged membranes (mimicking bacterial membranes). In terms of processing, after secretion onto the skin surface, the CAMP gene product is processed by a serine protease-dependent mechanism into multiple novel antimicrobial peptides distinct from and shorter than cathelicidin LL-37. These peptides show enhanced antimicrobial action, acquiring the ability to kill skin pathogens such as S.aureus, E.coli and C.albicans. These peptides have lost the ability to stimulate CXCL8/IL8 release from keratinocytes. The peptides act synergistically, killing bacteria at lower concentrations when present together, and maintain activity at increased salt condition.

It is found in the secreted. The protein resides in the vesicle. In terms of biological role, antimicrobial protein that is an integral component of the innate immune system. Binds to bacterial lipopolysaccharides (LPS). Acts via neutrophil N-formyl peptide receptors to enhance the release of CXCL2. Postsecretory processing generates multiple cathelicidin antimicrobial peptides with various lengths which act as a topical antimicrobial defense in sweat on skin. The unprocessed precursor form, cathelicidin antimicrobial peptide, inhibits the growth of Gram-negative E.coli and E.aerogenes with efficiencies comparable to that of the mature peptide LL-37 (in vitro). Its function is as follows. Antimicrobial peptide that is an integral component of the innate immune system. Binds to bacterial lipopolysaccharides (LPS). Causes membrane permeabilization by forming transmembrane pores (in vitro). Causes lysis of E.coli. Exhibits antimicrobial activity against Gram-negative bacteria such as P.aeruginosa, S.typhimurium, E.aerogenes, E.coli and P.syringae, Gram-positive bacteria such as L.monocytogenes, S.epidermidis, S.pyogenes and S.aureus, as well as vancomycin-resistant enterococci (in vitro). Exhibits antimicrobial activity against methicillin-resistant S.aureus, P.mirabilis, and C.albicans in low-salt media, but not in media containing 100 mM NaCl (in vitro). Forms chiral supramolecular assemblies with quinolone signal (PQS) molecules of P.aeruginosa, which may lead to interference of bacterial quorum signaling and perturbance of bacterial biofilm formation. May form supramolecular fiber-like assemblies on bacterial membranes. Induces cytokine and chemokine producation as well as TNF/TNFA and CSF2/GMCSF production in normal human keratinocytes. Exhibits hemolytic activity against red blood cells. Exhibits antimicrobial activity against E.coli and B.megaterium (in vitro). The polypeptide is Cathelicidin antimicrobial peptide (Trachypithecus cristatus (Silvered leaf-monkey)).